Here is a 220-residue protein sequence, read N- to C-terminus: Superoxide dismutase [Cu-Zn], chloroplastic (220 aa).

Residues 1–66 constitute a chloroplast transit peptide; the sequence is MAAHCILFSS…AAPKPLTVFA (66 aa). Cu cation is bound by residues His-112, His-114, and His-129. A disulfide bridge connects residues Cys-123 and Cys-212. Zn(2+) is bound by residues His-129, His-137, His-146, and Asp-149. His-186 lines the Cu cation pocket.

Belongs to the Cu-Zn superoxide dismutase family. As to quaternary structure, homotetramer. It depends on Cu cation as a cofactor. Zn(2+) is required as a cofactor.

The protein resides in the plastid. It localises to the chloroplast. The enzyme catalyses 2 superoxide + 2 H(+) = H2O2 + O2. Functionally, destroys radicals which are normally produced within the cells and which are toxic to biological systems. The polypeptide is Superoxide dismutase [Cu-Zn], chloroplastic (SODCP) (Solidago canadensis var. scabra (Tall goldenrod)).